Here is a 334-residue protein sequence, read N- to C-terminus: Tyrosine-protein kinase SRK3 (334 aa).

In terms of domain architecture, SH2 spans 1–42 (IRTLDDGGFYMANRISFPTLQNLVSHYMMDADGLAQRLSRPC). The Protein kinase domain maps to 66-321 (IQLQRKLGQG…LKNLLEDYYV (256 aa)). Residues 72 to 80 (LGQGNFGEV) and lysine 94 contribute to the ATP site. Aspartate 186 serves as the catalytic Proton acceptor.

This sequence belongs to the protein kinase superfamily. Tyr protein kinase family.

The protein localises to the cytoplasm. It catalyses the reaction L-tyrosyl-[protein] + ATP = O-phospho-L-tyrosyl-[protein] + ADP + H(+). The polypeptide is Tyrosine-protein kinase SRK3 (SRK3) (Spongilla lacustris (Freshwater sponge)).